Consider the following 239-residue polypeptide: Probable transcriptional regulatory protein BAA_0622 (239 aa).

It belongs to the TACO1 family. YeeN subfamily.

Its subcellular location is the cytoplasm. This is Probable transcriptional regulatory protein BAA_0622 from Bacillus anthracis (strain A0248).